The chain runs to 315 residues: Acetyl-coenzyme A carboxylase carboxyl transferase subunit alpha (315 aa).

A CoA carboxyltransferase C-terminal domain is found at 32-293 (NISDEIARLQ…RADLVQQLDM (262 aa)).

This sequence belongs to the AccA family. Acetyl-CoA carboxylase is a heterohexamer composed of biotin carboxyl carrier protein (AccB), biotin carboxylase (AccC) and two subunits each of ACCase subunit alpha (AccA) and ACCase subunit beta (AccD).

It localises to the cytoplasm. The catalysed reaction is N(6)-carboxybiotinyl-L-lysyl-[protein] + acetyl-CoA = N(6)-biotinyl-L-lysyl-[protein] + malonyl-CoA. It participates in lipid metabolism; malonyl-CoA biosynthesis; malonyl-CoA from acetyl-CoA: step 1/1. Component of the acetyl coenzyme A carboxylase (ACC) complex. First, biotin carboxylase catalyzes the carboxylation of biotin on its carrier protein (BCCP) and then the CO(2) group is transferred by the carboxyltransferase to acetyl-CoA to form malonyl-CoA. The sequence is that of Acetyl-coenzyme A carboxylase carboxyl transferase subunit alpha from Pseudomonas putida (strain ATCC 47054 / DSM 6125 / CFBP 8728 / NCIMB 11950 / KT2440).